The following is a 132-amino-acid chain: Large ribosomal subunit protein uL14 (132 aa).

This sequence belongs to the universal ribosomal protein uL14 family. Part of the 50S ribosomal subunit. Forms a cluster with proteins L3 and L24e, part of which may contact the 16S rRNA in 2 intersubunit bridges.

Its function is as follows. Binds to 23S rRNA. Forms part of two intersubunit bridges in the 70S ribosome. The polypeptide is Large ribosomal subunit protein uL14 (Methanocella arvoryzae (strain DSM 22066 / NBRC 105507 / MRE50)).